A 505-amino-acid polypeptide reads, in one-letter code: Catalase (505 aa).

A disordered region spans residues 1-25 (MSKQDGKLTGLFGAPVSDRENSMTA). Residues histidine 56 and asparagine 129 contribute to the active site. Residue tyrosine 339 coordinates heme.

The protein belongs to the catalase family. Homodimer. Heme serves as cofactor.

The enzyme catalyses 2 H2O2 = O2 + 2 H2O. Decomposes hydrogen peroxide into water and oxygen; serves to protect cells from the toxic effects of hydrogen peroxide. The polypeptide is Catalase (katA) (Staphylococcus warneri).